The primary structure comprises 91 residues: Probable Fe(2+)-trafficking protein (91 aa).

The protein belongs to the Fe(2+)-trafficking protein family.

Functionally, could be a mediator in iron transactions between iron acquisition and iron-requiring processes, such as synthesis and/or repair of Fe-S clusters in biosynthetic enzymes. In Burkholderia multivorans (strain ATCC 17616 / 249), this protein is Probable Fe(2+)-trafficking protein.